A 944-amino-acid polypeptide reads, in one-letter code: MAGSIGERREDFKVLNLLGKGSFACVYRAQSINTGIDVAIKMIDKKAMQKVGMVQRVRNEVEIHCQLKHPSILELYNYFEDSNYVYLILEMCHNGEVNRYLKNRKKPFAEDEARHFMHQIVTGMLYLHSHGILHRDLTLSNLLLSSDMNIKIADFGLATQLKMPNEKHFTMCGTPNYIAPEIATRSAHGLESDVWSLGCMLYTFLVGRPPFDTDTVKNTLNKIVLADYEMPDFVSREAKDLIFQLLRKNPADRLSLSSVLDHAFMTGFSNVQSKVMGAVEDSMDSGHATISTGFTGSSGVSISGRFQEKRILSGPSLPNKVNIFQFKDKHPTERSNGGSFHNTQRENNDFSEGNGRKPVACEDRPHSRYLRRAHSSDRSGTSQSQTYAKPSSYSERCHSVEMLAKPTHLKGYRTSSPPNSYGDIPQMFTDERSLERHTSPPVKEKTPSEFMGPAKQTAPRSNDKAETVQQWFGAMQLNGQFKNTPDTSSVSNMGGDFYSQQATQNGAPQYAWNDVKRKKNTDSSIESVLLGIKKNPGTGQRKAEKSQFGEQSKSRVPQQAFGSSTLRSIISPLNAERLKPIRQKTKNAVVSILESGEVCMEFLKEQNSQERVKEVLRISCDGNLIYVYHPNEGKGFPLVDRPPSPPENRLSYTFDSLPEKYWKKYQYAAKFIKLVRSKTPKVTYYTRYAKCMLMENSPTADVEVCFYDGAKIHKTSDVIRVIEKSGRSYTLEGSRLSTLSDEVRSYLDHANESHCVCLSLESAINTEEKKGENISLFPITFGRRPALAESPKTQPTPSVDSARERKEEQSYVNRVLHGSAASPPQMPNLNPSLISYDGSVFSATTVQPSPTSNIHNTPDHAQVLKSVFVENVGWASQLNSGAVWVQFNDGSQLVVQPGVSSIIYTAPNGQITRHGENDKLPEYIKSKLQCLSSILMLFASSSSR.

Positions Phe12–Met265 constitute a Protein kinase domain. Residues Leu18–Val26 and Lys41 each bind ATP. Asp136 serves as the catalytic Proton acceptor. Disordered stretches follow at residues Lys327 to Arg396, Arg432 to Asp463, and Leu530 to Phe561. Residues Arg378 to Ser394 are compositionally biased toward polar residues. Residues Arg432–Pro447 show a composition bias toward basic and acidic residues. Residues Phe548–Phe561 show a composition bias toward polar residues. The Cryptic POLO box 1 (CPB1) domain maps to Thr565–Lys678. Residues Thr679–Pro791 enclose the Cryptic POLO box 2 (CPB2) domain. A disordered region spans residues Ala786–Gln809. The 79-residue stretch at Gln862 to Ser940 folds into the POLO box domain.

The protein belongs to the protein kinase superfamily. Ser/Thr protein kinase family. CDC5/Polo subfamily. Homodimer. In terms of processing, ubiquitinated; leading to its degradation by the proteasome.

The protein resides in the cytoplasm. The protein localises to the cytoskeleton. It is found in the microtubule organizing center. It localises to the centrosome. Its subcellular location is the centriole. The enzyme catalyses L-seryl-[protein] + ATP = O-phospho-L-seryl-[protein] + ADP + H(+). The catalysed reaction is L-threonyl-[protein] + ATP = O-phospho-L-threonyl-[protein] + ADP + H(+). Its function is as follows. Serine/threonine-protein kinase that plays a central role in centriole duplication. Able to trigger procentriole formation on the surface of the parental centriole cylinder, leading to the recruitment of centriole biogenesis proteins such as sass6, cpap, ccp110, cep135 and gamma-tubulin. When overexpressed, it is able to induce centrosome amplification through the simultaneous generation of multiple procentrioles adjoining each parental centriole during S phase. Its central role in centriole replication suggests a possible role in tumorigenesis, centrosome aberrations being frequently observed in tumors. Also involved in deuterosome-mediated centriole amplification in multiciliated that can generate more than 100 centrioles. The chain is Serine/threonine-protein kinase PLK4 from Xenopus laevis (African clawed frog).